A 476-amino-acid polypeptide reads, in one-letter code: Ribulose bisphosphate carboxylase large chain (476 aa).

Residues asparagine 124 and threonine 174 each coordinate substrate. Lysine 176 acts as the Proton acceptor in catalysis. Lysine 178 contributes to the substrate binding site. 3 residues coordinate Mg(2+): lysine 202, aspartate 204, and glutamate 205. Lysine 202 carries the N6-carboxylysine modification. The active-site Proton acceptor is histidine 295. The substrate site is built by arginine 296, histidine 328, and serine 380.

Belongs to the RuBisCO large chain family. Type I subfamily. As to quaternary structure, heterohexadecamer of 8 large chains and 8 small chains; disulfide-linked. The disulfide link is formed within the large subunit homodimers. Mg(2+) is required as a cofactor. The disulfide bond which can form in the large chain dimeric partners within the hexadecamer appears to be associated with oxidative stress and protein turnover.

Its subcellular location is the carboxysome. It catalyses the reaction 2 (2R)-3-phosphoglycerate + 2 H(+) = D-ribulose 1,5-bisphosphate + CO2 + H2O. The enzyme catalyses D-ribulose 1,5-bisphosphate + O2 = 2-phosphoglycolate + (2R)-3-phosphoglycerate + 2 H(+). RuBisCO catalyzes two reactions: the carboxylation of D-ribulose 1,5-bisphosphate, the primary event in carbon dioxide fixation, as well as the oxidative fragmentation of the pentose substrate in the photorespiration process. Both reactions occur simultaneously and in competition at the same active site. The polypeptide is Ribulose bisphosphate carboxylase large chain (Cyanothece sp. (strain PCC 7425 / ATCC 29141)).